We begin with the raw amino-acid sequence, 343 residues long: MTTDTSGRTGNPAAAAPAERFRYGFLKGNPQLTKNGELKHLLTIEGLPRAILNQILDTAEQFVSVTDREVKKVPLLRGKSVFNLFFENSTRTRTTFEIAAKRLSADVINLNINASSTSKGESLLDTINNLSAMHADLFVVRHASSGAPYLIAEHCAPHVHVINAGDGRHAHPTQGLLDMYTIRHYKRDFTKLRVAIVGDILHSRVARSDIHALTTLGVPEVRAIGPRTLLPGGLEQMGVRVFHNLDEGLRDVDVIIMLRLQNERMSGALLPSAQEYFKSWGLTPERLALAAPDAIVMHPGPMNRGVEIDSQVADGPQSVILNQVTFGIAVRMAVMGIVAGTSD.

2 residues coordinate carbamoyl phosphate: Arg91 and Thr92. An L-aspartate-binding site is contributed by Lys119. 3 residues coordinate carbamoyl phosphate: Arg141, His171, and Gln174. Arg204 and Arg259 together coordinate L-aspartate. 2 residues coordinate carbamoyl phosphate: Gly300 and Pro301.

It belongs to the aspartate/ornithine carbamoyltransferase superfamily. ATCase family. As to quaternary structure, heterododecamer (2C3:3R2) of six catalytic PyrB chains organized as two trimers (C3), and six regulatory PyrI chains organized as three dimers (R2).

It carries out the reaction carbamoyl phosphate + L-aspartate = N-carbamoyl-L-aspartate + phosphate + H(+). It functions in the pathway pyrimidine metabolism; UMP biosynthesis via de novo pathway; (S)-dihydroorotate from bicarbonate: step 2/3. Catalyzes the condensation of carbamoyl phosphate and aspartate to form carbamoyl aspartate and inorganic phosphate, the committed step in the de novo pyrimidine nucleotide biosynthesis pathway. The polypeptide is Aspartate carbamoyltransferase catalytic subunit (Burkholderia mallei (strain NCTC 10247)).